The following is a 251-amino-acid chain: Segregation and condensation protein A (251 aa).

It belongs to the ScpA family. In terms of assembly, component of a cohesin-like complex composed of ScpA, ScpB and the Smc homodimer, in which ScpA and ScpB bind to the head domain of Smc. The presence of the three proteins is required for the association of the complex with DNA.

The protein localises to the cytoplasm. Participates in chromosomal partition during cell division. May act via the formation of a condensin-like complex containing Smc and ScpB that pull DNA away from mid-cell into both cell halves. The sequence is that of Segregation and condensation protein A from Exiguobacterium sibiricum (strain DSM 17290 / CCUG 55495 / CIP 109462 / JCM 13490 / 255-15).